Here is a 460-residue protein sequence, read N- to C-terminus: Ribulose bisphosphate carboxylase large chain (460 aa).

Lysine 4 carries the post-translational modification N6,N6,N6-trimethyllysine. Asparagine 113 and threonine 163 together coordinate substrate. Lysine 165 (proton acceptor) is an active-site residue. Lysine 167 lines the substrate pocket. Mg(2+) is bound by residues lysine 191, aspartate 193, and glutamate 194. At lysine 191 the chain carries N6-carboxylysine. Residue histidine 284 is the Proton acceptor of the active site. Substrate contacts are provided by arginine 285, histidine 317, and serine 369.

It belongs to the RuBisCO large chain family. Type I subfamily. As to quaternary structure, heterohexadecamer of 8 large chains and 8 small chains. Mg(2+) is required as a cofactor.

The protein resides in the plastid. It is found in the chloroplast. The enzyme catalyses 2 (2R)-3-phosphoglycerate + 2 H(+) = D-ribulose 1,5-bisphosphate + CO2 + H2O. It catalyses the reaction D-ribulose 1,5-bisphosphate + O2 = 2-phosphoglycolate + (2R)-3-phosphoglycerate + 2 H(+). RuBisCO catalyzes two reactions: the carboxylation of D-ribulose 1,5-bisphosphate, the primary event in carbon dioxide fixation, as well as the oxidative fragmentation of the pentose substrate in the photorespiration process. Both reactions occur simultaneously and in competition at the same active site. The chain is Ribulose bisphosphate carboxylase large chain from Cunninghamia lanceolata (China fir).